The primary structure comprises 116 residues: Nucleoid-associated protein PMM0020 (116 aa).

Over residues 87 to 98 (ESSTTTMKERMN) the composition is skewed to basic and acidic residues. The interval 87 to 116 (ESSTTTMKERMNDLTGGLNLNLPGLDNNDS) is disordered. A compositionally biased stretch (low complexity) spans 99 to 116 (DLTGGLNLNLPGLDNNDS).

Belongs to the YbaB/EbfC family. As to quaternary structure, homodimer.

The protein resides in the cytoplasm. Its subcellular location is the nucleoid. In terms of biological role, binds to DNA and alters its conformation. May be involved in regulation of gene expression, nucleoid organization and DNA protection. The protein is Nucleoid-associated protein PMM0020 of Prochlorococcus marinus subsp. pastoris (strain CCMP1986 / NIES-2087 / MED4).